Consider the following 645-residue polypeptide: Glucans biosynthesis glucosyltransferase H (645 aa).

Positions 1-28 are disordered; the sequence is MDGTVTLSPAPTDLPPVSSLDAGQPTLP. The next 7 membrane-spanning stretches (helical) occupy residues 64–84, 98–118, 423–443, 465–485, 504–524, 558–578, and 580–600; these read LIGG…SVLW, LFVL…AGFI, APMW…GAGI, AIWI…LGYI, ALSI…VMYL, SYGG…LVSP, and LAAW…VVAV.

Belongs to the glycosyltransferase 2 family. OpgH subfamily.

The protein resides in the cell inner membrane. It functions in the pathway glycan metabolism; osmoregulated periplasmic glucan (OPG) biosynthesis. Involved in the biosynthesis of osmoregulated periplasmic glucans (OPGs). This is Glucans biosynthesis glucosyltransferase H from Xanthomonas campestris pv. campestris (strain B100).